Consider the following 102-residue polypeptide: Putative septation protein SpoVG (102 aa).

The segment at 83-102 (TDEVIPDKNATSDNEESDEA) is disordered.

This sequence belongs to the SpoVG family.

In terms of biological role, could be involved in septation. This chain is Putative septation protein SpoVG, found in Staphylococcus epidermidis (strain ATCC 35984 / DSM 28319 / BCRC 17069 / CCUG 31568 / BM 3577 / RP62A).